The following is a 146-amino-acid chain: Ribosome maturation factor RimP (146 aa).

Belongs to the RimP family.

The protein resides in the cytoplasm. Functionally, required for maturation of 30S ribosomal subunits. The protein is Ribosome maturation factor RimP of Helicobacter pylori (strain HPAG1).